The primary structure comprises 260 residues: Achaete-scute homolog 2 (260 aa).

Disordered regions lie at residues 85–126 and 191–239; these read AGAC…RNER and PATR…EDSS. Low complexity-rich tracts occupy residues 110-121 and 200-218; these read ATEASSSSAAVA and TQPSASPASASLSCTSTSP. One can recognise a bHLH domain in the interval 118–170; it reads AAVARRNERERNRVKLVNLGFQALRQHVPHGGANKKLSKVETLRSAVEYIRAL.

In terms of assembly, efficient DNA binding requires dimerization with another bHLH protein. Forms heterodimers with bHLH transcription factor TCF3. May not heterodimerise with bHLH protein HAND1. As to expression, expressed in Schwann cells in the peripheral nerve (at protein level). Also expressed by endothelial cells (at protein level). May be expressed in neuronal precursor cells.

It is found in the nucleus. The protein localises to the cytoplasm. Transcription factor. Binds to E-box motifs 5'-CANNTG-3' in the regulatory elements of target genes, probably as a heterodimer with another basic helix-loop-helix (bHLH) protein such as the transcription factor TCF3. May bind both open and closed chromatin, acting as a pioneer transcription factor to allow other factors to bind and activate lineage-specific genes. Required during post-implantation development for the generation of some differentiated trophoblast cell types. Transcriptional activity of ASCL2 may be antagonised in a subset of trophoblast cells by bHLH transcription factor HAND1, perhaps by competing for dimerization with other bHLH proteins. Involved in differentiation and function of follicular T-helper (Tfh) cells, thereby playing a role in germinal center responses; probably modulates expression of genes involved in Tfh cell function, such as BCL6. May also act as a suppressor of Th1-, Th2- and Th17-cell differentiation. Induces the formation of stem cells in intestinal crypts in vitro, synergistically activating transcription of target genes, such as SOX9, together with TCF4/beta-catenin. May form a bistable transcriptional switch, controlling expression of its own gene together with Wnt/R-spondin signaling, and thereby maintaining stem cell characteristics. Modulates expression of target genes, including perhaps down-regulating EGR1/Krox24 and chemokine CXCL10/Mob-1 and up-regulating CXCR4 and CDKN1C/p57kip2, in Schwann cells. May play a role in reducing proliferation of Schwann cells, perhaps acting via modulation of expression of CDKN1C. May be dispensable for blastocyst formation and later embryonic function. May be involved in the determination of neuronal precursors. The sequence is that of Achaete-scute homolog 2 (Ascl2) from Rattus norvegicus (Rat).